We begin with the raw amino-acid sequence, 132 residues long: Small ribosomal subunit protein uS8c (132 aa).

It belongs to the universal ribosomal protein uS8 family. Part of the 30S ribosomal subunit.

It is found in the plastid. It localises to the chloroplast. Its function is as follows. One of the primary rRNA binding proteins, it binds directly to 16S rRNA central domain where it helps coordinate assembly of the platform of the 30S subunit. This is Small ribosomal subunit protein uS8c (rps8) from Chaetosphaeridium globosum (Charophycean green alga).